The sequence spans 85 residues: MCRYALIVLVVVVVATNLSEANIFDVPTCEPNRIYKTCGPACPPTCEDPDPDCNETPQCKAGCFCIPGLIENMKGGNCISPSLCP.

The signal sequence occupies residues 1–21 (MCRYALIVLVVVVVATNLSEA). 5 disulfides stabilise this stretch: cysteine 29–cysteine 63, cysteine 38–cysteine 59, cysteine 42–cysteine 53, cysteine 46–cysteine 84, and cysteine 65–cysteine 78. Residues 29 to 84 (CEPNRIYKTCGPACPPTCEDPDPDCNETPQCKAGCFCIPGLIENMKGGNCISPSLC) form the TIL domain.

Belongs to the serine protease inhibitor-like (TIL domain-containing) family. In terms of tissue distribution, expressed by the venom gland.

The protein localises to the secreted. Functionally, may be a phenoloxidase inhibitor that stabilizes or inhibits venom phenoloxidase while it is stored in the venom sac. This Pimpla hypochondriaca (Parasitoid wasp) protein is Cysteine-rich venom protein 1.